A 217-amino-acid polypeptide reads, in one-letter code: PTB-containing, cubilin and LRP1-interacting protein (217 aa).

In terms of domain architecture, PID spans 60–217 (VTYLGKVSTT…ASQELESDDG (158 aa)). The disordered stretch occupies residues 194–217 (KSDGRIHRSSSSEEASQELESDDG). Ser202, Ser203, and Ser214 each carry phosphoserine. Residues 208 to 217 (ASQELESDDG) are compositionally biased toward acidic residues.

As to quaternary structure, found in a complex with PID1/PCLI1, LRP1 and CUBNI. Interacts with LRP1 and CUBN.

It localises to the cytoplasm. Increases proliferation of preadipocytes without affecting adipocytic differentiation. This Mus musculus (Mouse) protein is PTB-containing, cubilin and LRP1-interacting protein (Pid1).